We begin with the raw amino-acid sequence, 290 residues long: PIH1 domain-containing protein 1 (290 aa).

The span at 34–50 (ELQQAQTSRPESTQIQP) shows a compositional bias: polar residues. The tract at residues 34-53 (ELQQAQTSRPESTQIQPQPG) is disordered. Serine 173 bears the Phosphoserine mark.

The protein belongs to the PIH1 family. In terms of assembly, component of the R2TP complex composed at least of RUVBL1, RUVBL2, RPAP3 and PIHD1. Component of the PAQosome complex which is responsible for the biogenesis of several protein complexes and which consists of R2TP complex members RUVBL1, RUVBL2, RPAP3 and PIH1D1, URI complex members PFDN2, PFDN6, PDRG1, UXT and URI1 as well as ASDURF, POLR2E and DNAAF10/WDR92. Interacts with phosphorylated TELO2 and mediates interaction of TELO2 with the R2TP complex. Interacts with phosphorylated ECD, EFTUD2/SNRP116, RPB1 and UBR5 and with RPB1 in a phosphorylation-independent manner. Interacts with the core C/D box snoRNP particle components NOP58 and FBL and with RUVBL1/TIP49. Interacts with RPAP3 and DNAAF10. Interacts with histone H4 and with SWI/SNF complex member SMARCB1/SNF5. Interacts with the mTORC1 complex member RPTOR. Interacts with MSL1.

Its subcellular location is the nucleus. In terms of biological role, involved in the assembly of C/D box small nucleolar ribonucleoprotein (snoRNP) particles. Recruits the SWI/SNF complex to the core promoter of rRNA genes and enhances pre-rRNA transcription. Mediates interaction of TELO2 with the R2TP complex which is necessary for the stability of MTOR and SMG1. Positively regulates the assembly and activity of the mTORC1 complex. The chain is PIH1 domain-containing protein 1 (PIH1D1) from Bos taurus (Bovine).